The primary structure comprises 59 residues: Sec-independent protein translocase protein TatA (59 aa).

Residues 1–21 (MGRLGLTEILVIVGIVILLFG) form a helical membrane-spanning segment.

The protein belongs to the TatA/E family. As to quaternary structure, forms a complex with TatC.

It is found in the cell inner membrane. In terms of biological role, part of the twin-arginine translocation (Tat) system that transports large folded proteins containing a characteristic twin-arginine motif in their signal peptide across membranes. TatA could form the protein-conducting channel of the Tat system. In Flavobacterium johnsoniae (strain ATCC 17061 / DSM 2064 / JCM 8514 / BCRC 14874 / CCUG 350202 / NBRC 14942 / NCIMB 11054 / UW101) (Cytophaga johnsonae), this protein is Sec-independent protein translocase protein TatA.